The primary structure comprises 484 residues: Adenylosuccinate lyase (484 aa).

An N-acetylalanine modification is found at alanine 2. Residues 20–21, 85–87, and 111–112 each bind substrate; these read RY, RHD, and TS. Lysine 147 carries the post-translational modification N6-acetyllysine. Histidine 159 (proton donor/acceptor) is an active-site residue. Glutamine 241 provides a ligand contact to substrate. Serine 289 acts as the Proton donor/acceptor in catalysis. Lysine 295 carries the N6-acetyllysine modification. Positions 303, 329, 334, and 338 each coordinate substrate. A Glycyl lysine isopeptide (Lys-Gly) (interchain with G-Cter in SUMO1) cross-link involves residue lysine 415.

Belongs to the lyase 1 family. Adenylosuccinate lyase subfamily. As to quaternary structure, homotetramer. Residues from neighboring subunits contribute catalytic and substrate-binding residues to each active site. Ubiquitously expressed. Both isoforms are produced by all tissues. Isoform 2 is 10-fold less abundant than isoform 1.

It catalyses the reaction N(6)-(1,2-dicarboxyethyl)-AMP = fumarate + AMP. It carries out the reaction (2S)-2-[5-amino-1-(5-phospho-beta-D-ribosyl)imidazole-4-carboxamido]succinate = 5-amino-1-(5-phospho-beta-D-ribosyl)imidazole-4-carboxamide + fumarate. It functions in the pathway purine metabolism; AMP biosynthesis via de novo pathway; AMP from IMP: step 2/2. Its pathway is purine metabolism; IMP biosynthesis via de novo pathway; 5-amino-1-(5-phospho-D-ribosyl)imidazole-4-carboxamide from 5-amino-1-(5-phospho-D-ribosyl)imidazole-4-carboxylate: step 2/2. Its activity is regulated as follows. The enzyme reaction kinetics indicate cooperativity between subunits. In terms of biological role, catalyzes two non-sequential steps in de novo AMP synthesis: converts (S)-2-(5-amino-1-(5-phospho-D-ribosyl)imidazole-4-carboxamido)succinate (SAICAR) to fumarate plus 5-amino-1-(5-phospho-D-ribosyl)imidazole-4-carboxamide, and thereby also contributes to de novo IMP synthesis, and converts succinyladenosine monophosphate (SAMP) to AMP and fumarate. The chain is Adenylosuccinate lyase (ADSL) from Homo sapiens (Human).